Consider the following 128-residue polypeptide: Large ribosomal subunit protein bL17 (128 aa).

This sequence belongs to the bacterial ribosomal protein bL17 family. Part of the 50S ribosomal subunit. Contacts protein L32.

In Streptococcus sanguinis (strain SK36), this protein is Large ribosomal subunit protein bL17.